The following is a 216-amino-acid chain: Ribonuclease T (216 aa).

One can recognise an Exonuclease domain in the interval 28-202 (VVVDVETGGF…YDTEQTARLF (175 aa)). The Mg(2+) site is built by D31, E33, H189, and D194. H189 acts as the Proton donor/acceptor in catalysis.

The protein belongs to the RNase T family. Homodimer. Mg(2+) is required as a cofactor.

Trims short 3' overhangs of a variety of RNA species, leaving a one or two nucleotide 3' overhang. Responsible for the end-turnover of tRNA: specifically removes the terminal AMP residue from uncharged tRNA (tRNA-C-C-A). Also appears to be involved in tRNA biosynthesis. The chain is Ribonuclease T from Xanthomonas campestris pv. campestris (strain 8004).